The primary structure comprises 322 residues: Hydroxypyruvate reductase (322 aa).

Residues 160 to 161 (RI), Asp180, 211 to 212 (CP), 238 to 240 (NSR), and Asp264 each bind NAD(+). The active site involves Arg240. The active site involves Glu269. The Proton donor role is filled by His288.

This sequence belongs to the D-isomer specific 2-hydroxyacid dehydrogenase family.

It carries out the reaction (R)-glycerate + NAD(+) = 3-hydroxypyruvate + NADH + H(+). It participates in carbohydrate metabolism. Involved in catabolism of D-apiose. Catalyzes the reduction of 3-hydroxypyruvate to glycerate. This is Hydroxypyruvate reductase from Blautia hydrogenotrophica (strain DSM 10507 / JCM 14656 / S5a33) (Ruminococcus hydrogenotrophicus).